A 371-amino-acid chain; its full sequence is Prephenate dehydrogenase (371 aa).

In terms of domain architecture, Prephenate/arogenate dehydrogenase spans 6–295 (DTILLAGLGL…GLPLRQKGAI (290 aa)). 7–37 (TILLAGLGLIGGSIALAIKKNHPGKRIIGID) provides a ligand contact to NAD(+). In terms of domain architecture, ACT spans 300–371 (DLYVDVPDHP…RAEYETFYAD (72 aa)).

Belongs to the prephenate/arogenate dehydrogenase family.

It carries out the reaction prephenate + NAD(+) = 3-(4-hydroxyphenyl)pyruvate + CO2 + NADH. Its pathway is amino-acid biosynthesis; L-tyrosine biosynthesis; (4-hydroxyphenyl)pyruvate from prephenate (NAD(+) route): step 1/1. This chain is Prephenate dehydrogenase (tyrA), found in Bacillus subtilis (strain 168).